The sequence spans 301 residues: 4-hydroxybenzoate octaprenyltransferase (301 aa).

8 helical membrane-spanning segments follow: residues Ile34 to Leu54, Leu57 to Ile77, Leu108 to Leu128, Leu152 to Val172, Val176 to Thr196, Phe221 to Gly241, Asp245 to Phe265, and Ala279 to Ala299.

Belongs to the UbiA prenyltransferase family. The cofactor is Mg(2+).

It localises to the cell inner membrane. It carries out the reaction all-trans-octaprenyl diphosphate + 4-hydroxybenzoate = 4-hydroxy-3-(all-trans-octaprenyl)benzoate + diphosphate. Its pathway is cofactor biosynthesis; ubiquinone biosynthesis. In terms of biological role, catalyzes the prenylation of para-hydroxybenzoate (PHB) with an all-trans polyprenyl group. Mediates the second step in the final reaction sequence of ubiquinone-8 (UQ-8) biosynthesis, which is the condensation of the polyisoprenoid side chain with PHB, generating the first membrane-bound Q intermediate 3-octaprenyl-4-hydroxybenzoate. This is 4-hydroxybenzoate octaprenyltransferase from Xanthomonas euvesicatoria pv. vesicatoria (strain 85-10) (Xanthomonas campestris pv. vesicatoria).